Consider the following 624-residue polypeptide: Bifunctional 3'-phosphoadenosine 5'-phosphosulfate synthase 1 (624 aa).

An N-acetylmethionine modification is found at Met-1. The segment at 1 to 225 (MEIPGSLCKK…VVELLQERDI (225 aa)) is adenylyl-sulfate kinase. Lys-12 is subject to N6-acetyllysine. 62–67 (GAGKTT) lines the ATP pocket. Residues 89–92 (DNIR), Phe-101, 106–109 (REEN), 132–133 (IS), Lys-171, and 184–185 (GF) each bind adenosine 5'-phosphosulfate. ATP-binding positions include Cys-207, Cys-212, 419-422 (QLRN), 521-525 (GRDPA), and Ala-563. The interval 234–624 (VKELYVPENK…TEYYKSLEKA (391 aa)) is sulfate adenylyltransferase.

This sequence in the N-terminal section; belongs to the APS kinase family. The protein in the C-terminal section; belongs to the sulfate adenylyltransferase family. In terms of assembly, homodimer. In terms of tissue distribution, expressed in testis, pancreas, kidney, thymus, prostate, ovary, small intestine, colon, leukocytes and liver. Also expressed in high endothelial venules (HEV) cells and in cartilage.

The catalysed reaction is sulfate + ATP + H(+) = adenosine 5'-phosphosulfate + diphosphate. It catalyses the reaction adenosine 5'-phosphosulfate + ATP = 3'-phosphoadenylyl sulfate + ADP + H(+). It participates in sulfur metabolism; sulfate assimilation. Inhibited by chlorate. The kinase activity is subject to inhibition by the substrate adenylyl sulfate. In terms of biological role, bifunctional enzyme with both ATP sulfurylase and APS kinase activity, which mediates two steps in the sulfate activation pathway. The first step is the transfer of a sulfate group to ATP to yield adenosine 5'-phosphosulfate (APS), and the second step is the transfer of a phosphate group from ATP to APS yielding 3'-phosphoadenylylsulfate (PAPS: activated sulfate donor used by sulfotransferase). In mammals, PAPS is the sole source of sulfate; APS appears to be only an intermediate in the sulfate-activation pathway. Required for normal biosynthesis of sulfated L-selectin ligands in endothelial cells. This is Bifunctional 3'-phosphoadenosine 5'-phosphosulfate synthase 1 (PAPSS1) from Homo sapiens (Human).